The following is a 217-amino-acid chain: 3-oxo-tetronate 4-phosphate decarboxylase (217 aa).

Positions 93 and 95 each coordinate Zn(2+). The Proton donor role is filled by Tyr-120.

It belongs to the aldolase class II family. AraD/FucA subfamily. Requires Zn(2+) as cofactor.

The catalysed reaction is 3-dehydro-4-O-phospho-D-erythronate + H(+) = dihydroxyacetone phosphate + CO2. It carries out the reaction 3-dehydro-4-O-phospho-L-erythronate + H(+) = dihydroxyacetone phosphate + CO2. Its function is as follows. Catalyzes the decarboxylation of 3-oxo-tetronate 4-phosphate to dihydroxyacetone phosphate (DHAP) and CO(2). The protein is 3-oxo-tetronate 4-phosphate decarboxylase of Cupriavidus necator (strain ATCC 17699 / DSM 428 / KCTC 22496 / NCIMB 10442 / H16 / Stanier 337) (Ralstonia eutropha).